A 360-amino-acid polypeptide reads, in one-letter code: Peptide chain release factor 1 (360 aa).

The residue at position 235 (Gln-235) is an N5-methylglutamine.

The protein belongs to the prokaryotic/mitochondrial release factor family. Methylated by PrmC. Methylation increases the termination efficiency of RF1.

The protein resides in the cytoplasm. Its function is as follows. Peptide chain release factor 1 directs the termination of translation in response to the peptide chain termination codons UAG and UAA. This chain is Peptide chain release factor 1, found in Paraburkholderia phymatum (strain DSM 17167 / CIP 108236 / LMG 21445 / STM815) (Burkholderia phymatum).